A 71-amino-acid polypeptide reads, in one-letter code: Large ribosomal subunit protein uL29 (71 aa).

Belongs to the universal ribosomal protein uL29 family.

The protein is Large ribosomal subunit protein uL29 (rpl29) of Aeropyrum pernix (strain ATCC 700893 / DSM 11879 / JCM 9820 / NBRC 100138 / K1).